Reading from the N-terminus, the 100-residue chain is RING finger protein Z (100 aa).

Gly-2 carries N-myristoyl glycine; by host lipidation. The RING-type; atypical zinc finger occupies 43-79; the sequence is CRCCWFANTNLIKCSDHYICLKCLNIMLGKSSFCDIC. Positions 93-96 match the PTAP/PSAP motif motif; sequence PSAP.

The protein belongs to the arenaviridae Z protein family. Interacts with protein NP; this interaction probably directs the encapsidated genome to budding sites. Interacts (via RING domain) with polymerase L; this interaction inhibits viral transcription and replication, Z partially blocks the product exit tunnel for the releasing nascent RNA product. Interacts with the glycoprotein complex; this interaction plays a role in virion budding. Interacts with host eIF4E; this interaction results in eIF4E reduced affinity for its substrate, the 5'-m7 G cap structure. Interacts (via late-budding domain) with host TSG101; this interaction is essential for budding and release of viral particles. Interacts with host RPLP0; this interaction may serve to load ribosome-like particles inside the virion. Interacts with host PML; this interaction induces PML bodies redistribution in the cytoplasm upon viral infection. Myristoylation is required for the role of RING finger protein Z in assembly and budding.

Its subcellular location is the virion. The protein resides in the host cytoplasm. It localises to the host perinuclear region. It is found in the host cell membrane. Plays a crucial role in virion assembly and budding. Expressed late in the virus life cycle, it acts as an inhibitor of viral transcription and RNA synthesis by interacting with the viral polymerase L. Presumably recruits the NP encapsidated genome to cellular membranes at budding sites via direct interaction with NP. Plays critical roles in the final steps of viral release by interacting with host TSG101, a member of the vacuolar protein-sorting pathway and using other cellular host proteins involved in vesicle formation pathway. The budding of the virus progeny occurs after association of protein Z with the viral glycoprotein complex SSP-GP1-GP2 at the cell periphery, step that requires myristoylation of protein Z. Also selectively represses protein production by associating with host eIF4E. In cell-based minigenome assay, has an inhibitory effect on the ribonucleoprotein machinery (vRNP), which is responsible for the replication and transcription of the viral genome. In Homo sapiens (Human), this protein is RING finger protein Z.